Here is a 305-residue protein sequence, read N- to C-terminus: Homoserine O-acetyltransferase (305 aa).

The active-site Acyl-thioester intermediate is the cysteine 142. Substrate-binding residues include lysine 163 and serine 192. Histidine 235 (proton acceptor) is an active-site residue. Residue glutamate 237 is part of the active site. Arginine 249 serves as a coordination point for substrate.

This sequence belongs to the MetA family.

The protein localises to the cytoplasm. The catalysed reaction is L-homoserine + acetyl-CoA = O-acetyl-L-homoserine + CoA. Its pathway is amino-acid biosynthesis; L-methionine biosynthesis via de novo pathway; O-acetyl-L-homoserine from L-homoserine: step 1/1. Functionally, transfers an acetyl group from acetyl-CoA to L-homoserine, forming acetyl-L-homoserine. The polypeptide is Homoserine O-acetyltransferase (Hyphomonas neptunium (strain ATCC 15444)).